The sequence spans 342 residues: Methionine import ATP-binding protein MetN (342 aa).

The ABC transporter domain occupies 2–241 (ITLEQVTKIY…PQQPITKRFV (240 aa)). 38 to 45 (GYSGAGKS) is a binding site for ATP.

Belongs to the ABC transporter superfamily. Methionine importer (TC 3.A.1.24) family. As to quaternary structure, the complex is composed of two ATP-binding proteins (MetN), two transmembrane proteins (MetI) and a solute-binding protein (MetQ).

It is found in the cell membrane. It catalyses the reaction L-methionine(out) + ATP + H2O = L-methionine(in) + ADP + phosphate + H(+). The catalysed reaction is D-methionine(out) + ATP + H2O = D-methionine(in) + ADP + phosphate + H(+). Functionally, part of the ABC transporter complex MetNIQ involved in methionine import. Responsible for energy coupling to the transport system. The polypeptide is Methionine import ATP-binding protein MetN (Geobacillus kaustophilus (strain HTA426)).